The following is a 414-amino-acid chain: Multifunctional CCA protein (414 aa).

Positions 8 and 11 each coordinate ATP. Glycine 8 and arginine 11 together coordinate CTP. Residues glutamate 21 and aspartate 23 each coordinate Mg(2+). ATP-binding residues include arginine 91, arginine 137, and arginine 140. The CTP site is built by arginine 91, arginine 137, and arginine 140. An HD domain is found at 228–329; the sequence is TGIHTMMTVA…LKLFDAIDVW (102 aa).

It belongs to the tRNA nucleotidyltransferase/poly(A) polymerase family. Bacterial CCA-adding enzyme type 1 subfamily. In terms of assembly, monomer. Can also form homodimers and oligomers. Mg(2+) serves as cofactor. The cofactor is Ni(2+).

The enzyme catalyses a tRNA precursor + 2 CTP + ATP = a tRNA with a 3' CCA end + 3 diphosphate. It carries out the reaction a tRNA with a 3' CCA end + 2 CTP + ATP = a tRNA with a 3' CCACCA end + 3 diphosphate. Catalyzes the addition and repair of the essential 3'-terminal CCA sequence in tRNAs without using a nucleic acid template. Adds these three nucleotides in the order of C, C, and A to the tRNA nucleotide-73, using CTP and ATP as substrates and producing inorganic pyrophosphate. tRNA 3'-terminal CCA addition is required both for tRNA processing and repair. Also involved in tRNA surveillance by mediating tandem CCA addition to generate a CCACCA at the 3' terminus of unstable tRNAs. While stable tRNAs receive only 3'-terminal CCA, unstable tRNAs are marked with CCACCA and rapidly degraded. The protein is Multifunctional CCA protein of Pectobacterium carotovorum subsp. carotovorum (strain PC1).